Consider the following 417-residue polypeptide: Serine hydroxymethyltransferase (417 aa).

(6S)-5,6,7,8-tetrahydrofolate is bound by residues L121 and 125-127 (GHL). K229 carries the N6-(pyridoxal phosphate)lysine modification. 355–357 (SPF) contacts (6S)-5,6,7,8-tetrahydrofolate.

The protein belongs to the SHMT family. In terms of assembly, homodimer. Pyridoxal 5'-phosphate serves as cofactor.

It localises to the cytoplasm. It carries out the reaction (6R)-5,10-methylene-5,6,7,8-tetrahydrofolate + glycine + H2O = (6S)-5,6,7,8-tetrahydrofolate + L-serine. It functions in the pathway one-carbon metabolism; tetrahydrofolate interconversion. The protein operates within amino-acid biosynthesis; glycine biosynthesis; glycine from L-serine: step 1/1. In terms of biological role, catalyzes the reversible interconversion of serine and glycine with tetrahydrofolate (THF) serving as the one-carbon carrier. This reaction serves as the major source of one-carbon groups required for the biosynthesis of purines, thymidylate, methionine, and other important biomolecules. Also exhibits THF-independent aldolase activity toward beta-hydroxyamino acids, producing glycine and aldehydes, via a retro-aldol mechanism. This is Serine hydroxymethyltransferase from Xanthomonas oryzae pv. oryzae (strain MAFF 311018).